The sequence spans 488 residues: Glutamyl-tRNA(Gln) amidotransferase subunit A, mitochondrial (488 aa).

Catalysis depends on charge relay system residues lysine 62 and serine 140. Residue serine 164 is the Acyl-ester intermediate of the active site. A disordered region spans residues 205–228 (GHDDNDPTSITPQTRERIQDRLSR). The segment covering 218-227 (TRERIQDRLS) has biased composition (basic and acidic residues).

It belongs to the amidase family. GatA subfamily. Subunit of the heterotrimeric GatCAB amidotransferase (AdT) complex, composed of A, B and C subunits.

The protein resides in the mitochondrion. The enzyme catalyses L-glutamyl-tRNA(Gln) + L-glutamine + ATP + H2O = L-glutaminyl-tRNA(Gln) + L-glutamate + ADP + phosphate + H(+). In terms of biological role, allows the formation of correctly charged Gln-tRNA(Gln) through the transamidation of misacylated Glu-tRNA(Gln) in the mitochondria. The reaction takes place in the presence of glutamine and ATP through an activated gamma-phospho-Glu-tRNA(Gln). This Tuber melanosporum (strain Mel28) (Perigord black truffle) protein is Glutamyl-tRNA(Gln) amidotransferase subunit A, mitochondrial.